We begin with the raw amino-acid sequence, 183 residues long: Ribonuclease H (183 aa).

In terms of domain architecture, RNase H type-1 spans 2–151; sequence SQARFIAFSD…VDQLAQAAAR (150 aa). Positions 11, 57, 79, and 143 each coordinate Mg(2+).

This sequence belongs to the RNase H family. Monomer. It depends on Mg(2+) as a cofactor.

It localises to the cytoplasm. It catalyses the reaction Endonucleolytic cleavage to 5'-phosphomonoester.. Its function is as follows. Endonuclease that specifically degrades the RNA of RNA-DNA hybrids. The protein is Ribonuclease H of Anaeromyxobacter dehalogenans (strain 2CP-1 / ATCC BAA-258).